A 190-amino-acid polypeptide reads, in one-letter code: CASP-like protein 2U2 (190 aa).

The Cytoplasmic segment spans residues 1 to 10 (MGEKMQGFQG). The helical transmembrane segment at 11 to 31 (WSIGIRFLTSCVSIASLILLL) threads the bilayer. Over 32–59 (KSKQTVQVSVGLDYVTQQVKYSDTSAFV) the chain is Extracellular. The chain crosses the membrane as a helical span at residues 60 to 80 (YLVFSDILVAVYCIVVLVGLI). Topologically, residues 81 to 94 (PAALGKSHPGKAGQ) are cytoplasmic. Residues 95–115 (WAIFIFDQVLAYVLLAAASSA) traverse the membrane as a helical segment. At 116-144 (TEVAYLADKGMAKTSWEAVCPRFAHFCHT) the chain is on the extracellular side. The helical transmembrane segment at 145–165 (VMASISLSFVAVLLLALLAVV) threads the bilayer. Residues 166 to 190 (SASGLFGRFYRRPLFAVKMRHNTLI) lie on the Cytoplasmic side of the membrane.

This sequence belongs to the Casparian strip membrane proteins (CASP) family. As to quaternary structure, homodimer and heterodimers.

It localises to the cell membrane. The chain is CASP-like protein 2U2 from Pteridium aquilinum subsp. aquilinum (Bracken fern).